A 266-amino-acid polypeptide reads, in one-letter code: ATG8-interacting protein 2 (266 aa).

Residues 14-17 (WEVV) carry the AIM (Atg8-family-interacting motif) motif. A helical membrane pass occupies residues 191-210 (TNTVWSICIAAAVMGIVILG). The short motif at 218 to 221 (WQIL) is the AIM (Atg8-family-interacting motif) element.

As to quaternary structure, interacts with ATG8F.

Its subcellular location is the endoplasmic reticulum membrane. It localises to the membrane. Functionally, may be involved in salt stress-induced vesicle-to-vacuole trafficking pathway. Through its interaction with ATG8F, may enable delivery of the vesicle bodies to the vacuole by an autophagic pathway. Plays a role in seed germination in response to exogenous abscisic acid (ABA) treatment. The sequence is that of ATG8-interacting protein 2 from Arabidopsis thaliana (Mouse-ear cress).